The chain runs to 150 residues: Large ribosomal subunit protein bL9 (150 aa).

Belongs to the bacterial ribosomal protein bL9 family.

Binds to the 23S rRNA. The polypeptide is Large ribosomal subunit protein bL9 (Renibacterium salmoninarum (strain ATCC 33209 / DSM 20767 / JCM 11484 / NBRC 15589 / NCIMB 2235)).